The following is a 55-amino-acid chain: Seripauperin-7 (55 aa).

A signal peptide spans 1-20; sequence MVKLTSIAAGVAAIAAGASA.

Belongs to the SRP1/TIP1 family. Seripauperin subfamily.

This Saccharomyces cerevisiae (strain ATCC 204508 / S288c) (Baker's yeast) protein is Seripauperin-7 (PAU7).